A 225-amino-acid polypeptide reads, in one-letter code: Uracil-DNA glycosylase (225 aa).

The active-site Proton acceptor is the Asp-65.

This sequence belongs to the uracil-DNA glycosylase (UDG) superfamily. UNG family.

The protein resides in the cytoplasm. The enzyme catalyses Hydrolyzes single-stranded DNA or mismatched double-stranded DNA and polynucleotides, releasing free uracil.. Functionally, excises uracil residues from the DNA which can arise as a result of misincorporation of dUMP residues by DNA polymerase or due to deamination of cytosine. The chain is Uracil-DNA glycosylase from Bacillus cereus (strain ZK / E33L).